Here is a 530-residue protein sequence, read N- to C-terminus: Light-harvesting complex I LH38 proteins (530 aa).

The protein localises to the plastid. It is found in the chloroplast. In Euglena gracilis, this protein is Light-harvesting complex I LH38 proteins.